A 1152-amino-acid chain; its full sequence is Receptor-type guanylate cyclase gcy-8 (1152 aa).

The first 21 residues, methionine 1–cysteine 21, serve as a signal peptide directing secretion. The Extracellular portion of the chain corresponds to glutamine 22–threonine 506. N-linked (GlcNAc...) asparagine glycans are attached at residues asparagine 31, asparagine 55, asparagine 385, and asparagine 465. A helical membrane pass occupies residues leucine 507–phenylalanine 527. Over alanine 528–arginine 1152 the chain is Cytoplasmic. In terms of domain architecture, Protein kinase spans arginine 567–leucine 857. Residues methionine 573–alanine 581 and lysine 593 contribute to the ATP site. Residues glycine 861–leucine 899 are a coiled coil. The Guanylate cyclase domain occupies threonine 927–glutamate 1057. Positions 932, 933, and 976 each coordinate Mg(2+).

The protein belongs to the adenylyl cyclase class-4/guanylyl cyclase family. As to expression, expressed bilaterally in AFD sensory neurons.

Its subcellular location is the cell membrane. The protein resides in the cell projection. It localises to the cilium. The catalysed reaction is GTP = 3',5'-cyclic GMP + diphosphate. With respect to regulation, inhibited by chloride with an IC(50) of 60 mM. In terms of biological role, guanylate cyclase involved in the production of the second messenger cGMP. Regulates thermotaxis responses in AFD sensory neurons. May regulate AFD neuronal activity such as calcium responses to temperature gradients. Maintains the microvilli receptive ending morphology of the AFD thermosensory neurons by regulating cGMP levels downstream of kcc-3. cGMP levels antagonize the actin cytoskeleton regulator wsp-1. This Caenorhabditis elegans protein is Receptor-type guanylate cyclase gcy-8.